The following is a 190-amino-acid chain: Cancer-related nucleoside-triphosphatase (190 aa).

Position 2 is an N-acetylalanine (alanine 2). ATP contacts are provided by residues glycine 9–threonine 16 and valine 109–glycine 116. An N6-acetyllysine modification is found at lysine 165.

This sequence belongs to the THEP1 NTPase family. Monomer.

It catalyses the reaction a ribonucleoside 5'-triphosphate + H2O = a ribonucleoside 5'-diphosphate + phosphate + H(+). The enzyme catalyses 5-methyl-UTP + H2O = 5-methyl-UDP + phosphate + H(+). It carries out the reaction CTP + H2O = CDP + phosphate + H(+). The catalysed reaction is ATP + H2O = ADP + phosphate + H(+). It catalyses the reaction GTP + H2O = GDP + phosphate + H(+). Its function is as follows. Has nucleotide phosphatase activity towards ATP, GTP, CTP, TTP and UTP. Hydrolyzes nucleoside diphosphates with lower efficiency. The polypeptide is Cancer-related nucleoside-triphosphatase (Homo sapiens (Human)).